The sequence spans 253 residues: Cyclin-C1-1 (253 aa).

Belongs to the cyclin family. Cyclin C subfamily.

The protein is Cyclin-C1-1 (CYCC1-1) of Arabidopsis thaliana (Mouse-ear cress).